Here is a 501-residue protein sequence, read N- to C-terminus: Splicing factor 3A subunit 3 (501 aa).

At methionine 1 the chain carries N-acetylmethionine. Serine 54 and serine 121 each carry phosphoserine. The short motif at 175–179 (KERKN) is the Nuclear localization signal element. Phosphoserine occurs at positions 295 and 299. Residues 343–354 (ENVQRKQARTGE) are compositionally biased toward basic and acidic residues. Residues 343-374 (ENVQRKQARTGEEREEEEEEQISESESEDEEN) are disordered. A compositionally biased stretch (acidic residues) spans 355-374 (EREEEEEEQISESESEDEEN). Phosphoserine is present on residues serine 365, serine 367, and serine 369. The Matrin-type zinc-finger motif lies at 406–437 (YNCEICGNYTYRGPKAFQRHFAEWRHAHGMRC). Threonine 475 carries the phosphothreonine modification.

Belongs to the SF3A3 family. As to quaternary structure, component of the 17S U2 SnRNP complex, a ribonucleoprotein complex that contains small nuclear RNA (snRNA) U2 and a number of specific proteins. Part of the SF3A subcomplex of the 17S U2 SnRNP complex which is composed of three subunits; SF3A3/SAP61, SF3A2/SAP62 and SF3A1/SAP114. SF3A associates with the splicing factor SF3B and a 12S RNA unit to form the mature 17S U2 small nuclear ribonucleoprotein complex (17S U2 snRNP). Identified in the spliceosome 'E' complex, a precursor of the spliceosome 'A' complex. Identified in the spliceosome 'A' and 'B' complexes. Identified in the spliceosome 'C' complex. As to expression, ubiquitous.

It localises to the nucleus speckle. The protein localises to the nucleus. Functionally, component of the 17S U2 SnRNP complex of the spliceosome, a large ribonucleoprotein complex that removes introns from transcribed pre-mRNAs. The 17S U2 SnRNP complex (1) directly participates in early spliceosome assembly and (2) mediates recognition of the intron branch site during pre-mRNA splicing by promoting the selection of the pre-mRNA branch-site adenosine, the nucleophile for the first step of splicing. Within the 17S U2 SnRNP complex, SF3A3 is part of the SF3A subcomplex that contributes to the assembly of the 17S U2 snRNP, and the subsequent assembly of the pre-spliceosome 'E' complex and the pre-catalytic spliceosome 'A' complex. Involved in pre-mRNA splicing as a component of pre-catalytic spliceosome 'B' complexes. The polypeptide is Splicing factor 3A subunit 3 (SF3A3) (Homo sapiens (Human)).